Reading from the N-terminus, the 299-residue chain is tRNA-cytidine(32) 2-sulfurtransferase (299 aa).

Residues 49–54 (SGGKDS) carry the PP-loop motif motif. The [4Fe-4S] cluster site is built by Cys-124, Cys-127, and Cys-215.

This sequence belongs to the TtcA family. Homodimer. Mg(2+) is required as a cofactor. The cofactor is [4Fe-4S] cluster.

It is found in the cytoplasm. The enzyme catalyses cytidine(32) in tRNA + S-sulfanyl-L-cysteinyl-[cysteine desulfurase] + AH2 + ATP = 2-thiocytidine(32) in tRNA + L-cysteinyl-[cysteine desulfurase] + A + AMP + diphosphate + H(+). It functions in the pathway tRNA modification. Its function is as follows. Catalyzes the ATP-dependent 2-thiolation of cytidine in position 32 of tRNA, to form 2-thiocytidine (s(2)C32). The sulfur atoms are provided by the cysteine/cysteine desulfurase (IscS) system. This is tRNA-cytidine(32) 2-sulfurtransferase from Deinococcus radiodurans (strain ATCC 13939 / DSM 20539 / JCM 16871 / CCUG 27074 / LMG 4051 / NBRC 15346 / NCIMB 9279 / VKM B-1422 / R1).